We begin with the raw amino-acid sequence, 101 residues long: Aspartyl/glutamyl-tRNA(Asn/Gln) amidotransferase subunit C (101 aa).

The protein belongs to the GatC family. In terms of assembly, heterotrimer of A, B and C subunits.

It carries out the reaction L-glutamyl-tRNA(Gln) + L-glutamine + ATP + H2O = L-glutaminyl-tRNA(Gln) + L-glutamate + ADP + phosphate + H(+). It catalyses the reaction L-aspartyl-tRNA(Asn) + L-glutamine + ATP + H2O = L-asparaginyl-tRNA(Asn) + L-glutamate + ADP + phosphate + 2 H(+). In terms of biological role, allows the formation of correctly charged Asn-tRNA(Asn) or Gln-tRNA(Gln) through the transamidation of misacylated Asp-tRNA(Asn) or Glu-tRNA(Gln) in organisms which lack either or both of asparaginyl-tRNA or glutaminyl-tRNA synthetases. The reaction takes place in the presence of glutamine and ATP through an activated phospho-Asp-tRNA(Asn) or phospho-Glu-tRNA(Gln). In Salinispora tropica (strain ATCC BAA-916 / DSM 44818 / JCM 13857 / NBRC 105044 / CNB-440), this protein is Aspartyl/glutamyl-tRNA(Asn/Gln) amidotransferase subunit C.